The sequence spans 166 residues: MANKLFLVCAALALCFILTNASVYRTVVEFDEDDASNPIGPIQKCQKEFQQDQHLRACQRWMRKQMWQGRGGGPSLDDEFDMEDDIENPQRRQLLQKCCSELRQEEPVCVCPTLRQAAKAVRFQGQQHQPEQVRKIYQAAKYLPNICKIQQVGVCPFQIPSIPSYY.

The signal sequence occupies residues 1–21 (MANKLFLVCAALALCFILTNA). 2 propeptides span residues 22 to 37 (SVYR…DASN) and 73 to 88 (GPSL…DIEN).

The protein belongs to the 2S seed storage albumins family. In terms of assembly, the mature protein consists of a small and a large chain linked by disulfide bonds.

In terms of biological role, this is a 2S seed storage protein. The sequence is that of 2S seed storage protein 4 (AT2S4) from Arabidopsis thaliana (Mouse-ear cress).